Consider the following 142-residue polypeptide: Large ribosomal subunit protein uL13 (142 aa).

This sequence belongs to the universal ribosomal protein uL13 family. Part of the 50S ribosomal subunit.

In terms of biological role, this protein is one of the early assembly proteins of the 50S ribosomal subunit, although it is not seen to bind rRNA by itself. It is important during the early stages of 50S assembly. The chain is Large ribosomal subunit protein uL13 from Salmonella agona (strain SL483).